The chain runs to 421 residues: Zinc finger protein 584 (421 aa).

Residues 17-88 (VMFEDVTVYF…SWVDVTPVSR (72 aa)) form the KRAB domain. Over residues 120–129 (QHQDTHSEGK) the composition is skewed to basic and acidic residues. Residues 120 to 146 (QHQDTHSEGKPRRHTEHGAAFPPGSSC) form a disordered region. 8 C2H2-type zinc fingers span residues 159–181 (FKCS…LITH), 214–236 (HVCN…QKVH), 242–264 (FKCS…QRIH), 270–292 (YECS…RKVH), 298–320 (YECT…QRVH), 326–348 (FECK…WKVH), 354–376 (YECS…QQFH), and 382–404 (YECT…KKVH). Residues 402 to 421 (KVHTPERRQEDRAHGKVVSC) form a disordered region. A compositionally biased stretch (basic and acidic residues) spans 404–415 (HTPERRQEDRAH).

It belongs to the krueppel C2H2-type zinc-finger protein family.

The protein localises to the nucleus. Functionally, may be involved in transcriptional regulation. This is Zinc finger protein 584 (ZNF584) from Homo sapiens (Human).